The primary structure comprises 430 residues: Retinoic acid receptor RXR-alpha-A (430 aa).

A compositionally biased stretch (low complexity) spans 1–20; it reads MHPSLLSPTSLGPSGSLHSP. Disordered regions lie at residues 1-25 and 48-73; these read MHPSLLSPTSLGPSGSLHSPISTLS and ASPGVGYGPSISPQLNSHMNSVSSSE. The interval 1 to 99 is modulating; that stretch reads MHPSLLSPTS…QPSGTPLSLT (99 aa). The span at 58-72 shows a compositional bias: polar residues; that stretch reads ISPQLNSHMNSVSSS. Positions 100 to 175 form a DNA-binding region, nuclear receptor; the sequence is KHICAICGDR…MGMKREAVQE (76 aa). 4 residues coordinate Zn(2+): C103, C106, C120, and C123. The segment at 103–123 adopts an NR C4-type zinc-finger fold; that stretch reads CAICGDRSSGKHYGVYSCEGC. The nuclear localization signal stretch occupies residues 128–133; the sequence is KRTVRK. Zn(2+) is bound by residues C139, C145, C155, and C158. Residues 139–158 form an NR C4-type zinc finger; that stretch reads CRDNKDCVIDKRQRNRCQYC. Residues 174–186 are compositionally biased toward basic and acidic residues; it reads QEERQRAKERSEN. Positions 174–196 are disordered; the sequence is QEERQRAKERSENEVESTSSANE. A hinge region spans residues 176–192; it reads ERQRAKERSENEVESTS. In terms of domain architecture, NR LBD spans 195 to 426; that stretch reads NEDMPVEKIL…TFLMEMLEAP (232 aa). Residues R284 and A295 each contribute to the 9-cis-retinoate site. Residues R284 and A295 each coordinate all-trans-retinoate. Residues 316-336 form a required for nuclear export region; that stretch reads RVLTELVSKMRDMQMDKTELG. Residues 415–426 form an AF-2 region; it reads IDTFLMEMLEAP.

The protein belongs to the nuclear hormone receptor family. NR2 subfamily. In terms of assembly, homodimer. Heterodimer; with a rar molecule. Binds DNA preferentially as a rar/rxr heterodimer.

The protein localises to the nucleus. Functionally, receptor for retinoic acid that acts as a transcription factor. Forms homo- or heterodimers with retinoic acid receptors (rars) and binds to target response elements in response to their ligands, all-trans or 9-cis retinoic acid, to regulate gene expression in various biological processes. The rar/rxr heterodimers bind to the retinoic acid response elements (RARE) composed of tandem 5'-AGGTCA-3' sites known as DR1-DR5 to regulate transcription. The high affinity ligand for rxrs is 9-cis retinoic acid. In the absence of ligand, the rar/rxr heterodimers associate with a multiprotein complex containing transcription corepressors that induce histone deacetylation, chromatin condensation and transcriptional suppression. On ligand binding, the corepressors dissociate from the receptors and coactivators are recruited leading to transcriptional activation. The protein is Retinoic acid receptor RXR-alpha-A of Danio rerio (Zebrafish).